The following is a 494-amino-acid chain: Putative myristoylated protein 006R (494 aa).

Residue glycine 2 is the site of N-myristoyl glycine; by host attachment. 3 helical membrane passes run 193 to 213 (VAAL…GGIA), 214 to 234 (VAGR…LVVW), and 465 to 485 (WLLY…ILAF).

This sequence belongs to the IIV-6 118L/458R family.

The protein resides in the membrane. This is Putative myristoylated protein 006R from Aedes vexans (Inland floodwater mosquito).